A 351-amino-acid chain; its full sequence is MIFDSLISLIPISMIMVGCCSNVISLELIMKQSQSHAILVTFFQFATVAFISFFVNIRWKQVFSIFWIPIGLRERKIPLKTYFLMVSIFFILSVLNNKALDCDIPIPFHMIFRSSSLLSTIVIGSIFYRKSYSKQQILSLIMVTLGIIFATFSSMPDSKKEISLGHEPNLLRFSIGMLMLIAAMFLSSILGLIQEHTYKLYGKDRHYETIFYSHLFSLPFFLLFKDDILHHIQLNNDSALMALPFGFGSFPTLWVYLIVNVLTQYVCIQGVFILTGKTSTLTCTLVISIRKFLSIIISVIYFNNHFTSLLFTGTILVFLGTFMYSTSGKVIEKPLPPTKQVKEIEKEKKLN.

10 helical membrane-spanning segments follow: residues 6 to 26 (LISL…VISL), 37 to 57 (AILV…FVNI), 77 to 97 (IPLK…VLNN), 104 to 124 (IPIP…IVIG), 136 to 156 (QILS…SSMP), 173 to 193 (FSIG…LGLI), 209 to 229 (TIFY…DDIL), 252 to 274 (TLWV…VFIL), 282 to 302 (TCTL…VIYF), and 306 to 326 (FTSL…MYST).

It belongs to the nucleotide-sugar transporter family. SLC35B subfamily.

The protein resides in the golgi apparatus membrane. Sugar transporter that specifically mediates the transport of UDP-N-acetylglucosamine (UDP-GlcNAc) from cytosol into Golgi. The chain is UDP-N-acetylglucosamine transporter slc35b4 (slc35b4) from Dictyostelium discoideum (Social amoeba).